The primary structure comprises 96 residues: Neutrophil defensin 1 (96 aa).

The first 19 residues, 1–19, serve as a signal peptide directing secretion; the sequence is MRTLVILAAILLVALQAQA. A propeptide spanning residues 20–66 is cleaved from the precursor; it reads EPLQARTDEATAAQEQIPTDNPEVVVSLAWDESLAPKDSVPGLRKNM. Intrachain disulfides connect cysteine 68/cysteine 96, cysteine 70/cysteine 85, and cysteine 75/cysteine 95. Tyrosine 87 carries the phosphotyrosine modification.

As to quaternary structure, tetramer. Dimer. Interacts with RETN. Post-translationally, ADP-ribosylation drastically reduces cytotoxic and antibacterial activities, and enhances IL8 production.

It localises to the secreted. In terms of biological role, effector molecule of the innate immune system that acts via antibiotic-like properties against a broad array of infectious agents including bacteria, fungi, and viruses or by promoting the activation and maturation of some APCs. Interacts with the essential precursor of cell wall synthesis lipid II to inhibit bacterial cell wall synthesis. Inhibits adenovirus infection via inhibition of viral disassembly at the vertex region, thereby restricting the release of internal capsid protein pVI, which is required for endosomal membrane penetration during cell entry. In addition, interaction with adenovirus capsid leads to the redirection of viral particles to TLR4 thereby promoting a NLRP3-mediated inflammasome response and interleukin 1-beta (IL-1beta) release. Induces the production of proinflammatory cytokines including type I interferon (IFN) in plasmacytoid dendritic cells (pDCs) by triggering the degradation of NFKBIA and nuclear translocation of IRF1, both of which are required for activation of pDCs. This is Neutrophil defensin 1 from Macaca mulatta (Rhesus macaque).